Consider the following 641-residue polypeptide: Probable serine protease FE772_23065 (641 aa).

Residues 532–552 (WVELIAILAAAGWIRVMLIGL) form a helical membrane-spanning segment.

Belongs to the peptidase S1 family.

The protein localises to the cell inner membrane. Its function is as follows. Possibly a dedicated protease for substrate gasdermin bGSDM; cleaves the bGSDM precursor, releasing the pore-forming moiety, which integrates into the membrane and triggers cell death. Involved in defense against bacteriophages. When this probable 4 gene operon (bGSDM-FE772_23060-FE772_23065-FE772_23070) is inserted into E.coli it provides nearly 100-fold protection against phages T5 and T6 and about 8-fold against phage T4. The operon without bGSDM no longer protects against phage. The protein is Probable serine protease FE772_23065 of Lysobacter enzymogenes.